Here is a 627-residue protein sequence, read N- to C-terminus: MSRDGGDVIETAVKSLGKGFDLTADFRLKYCKDGDGSAGDDRLVVLDQTQNRELHIPGFGVFQNVSADINCDKGERTRFRSDILDFNKMSEYFNQRSSVTGKIPSGNFNATFGFQSGSWATDAANVKSLGLDASVVTLFNLHIHNPNRLRLTDRVRNAVPSSWDPQLLARFIERYGTHVITGVSVGGQDVVVVRQDKSSDLDNDLLRHHLYDLGDQLFTGSCLLSTRRLNKAYHHSHSQPKFPEAFNVFDDKQTVAFNNFSINSQNGITVICAKRGGDGRAKSHSEWLITVPDKPDAINFNFIPITSLLKDVPGSGLLSHAMSLYLRYKPPLMDLQYFLDFSGPRAWAPVHNDLPFGAAPNMASAYPALHINFMGPKLYVNTTPVTSEKNPVTGMRFFLEGKKCNRLAIHLQHLDNTRTTVGEKITDEHIWRGSDQITDNDRYFEPLNGKKFSHVCTVPVKYDPNWIKTTSNHKSQNDVAFIVTGAQLEVKKHGSKSVLHLRLRYTKVSDHYVVQNSWVHGPIGTSQKSGIFSSMSMPLTSGSVHHNMIQKDKNEVVLDSGVFPGGPPVPANNKIVKFVDLSQLCRGPQHSPGHWLVTGVRLYLDKGKLCLHVKFALLHRQRLLVSS.

An MACPF domain is found at 1 to 339 (MSRDGGDVIE…PPLMDLQYFL (339 aa)).

The protein belongs to the complement C6/C7/C8/C9 (TC 1.C.39) family.

In terms of biological role, negatively controls the salicylic acid (SA)-mediated pathway of programmed cell death in plant immunity. This is MACPF domain-containing protein At1g14780 from Arabidopsis thaliana (Mouse-ear cress).